The chain runs to 844 residues: DNA mismatch repair protein MutS (844 aa).

ATP is bound at residue 610 to 617 (GPNMGGKS).

The protein belongs to the DNA mismatch repair MutS family.

In terms of biological role, this protein is involved in the repair of mismatches in DNA. It is possible that it carries out the mismatch recognition step. This protein has a weak ATPase activity. The polypeptide is DNA mismatch repair protein MutS (Francisella tularensis subsp. holarctica (strain FTNF002-00 / FTA)).